A 182-amino-acid chain; its full sequence is Lipoprotein signal peptidase (182 aa).

The next 3 helical transmembrane spans lie at Val-12–Trp-32, Ala-68–Val-88, and Val-91–Ile-111. Catalysis depends on residues Asp-127 and Asp-140. A helical membrane pass occupies residues Val-135–Leu-155.

This sequence belongs to the peptidase A8 family.

It localises to the cell membrane. It catalyses the reaction Release of signal peptides from bacterial membrane prolipoproteins. Hydrolyzes -Xaa-Yaa-Zaa-|-(S,diacylglyceryl)Cys-, in which Xaa is hydrophobic (preferably Leu), and Yaa (Ala or Ser) and Zaa (Gly or Ala) have small, neutral side chains.. Its pathway is protein modification; lipoprotein biosynthesis (signal peptide cleavage). This protein specifically catalyzes the removal of signal peptides from prolipoproteins. This is Lipoprotein signal peptidase from Bifidobacterium longum (strain DJO10A).